The primary structure comprises 131 residues: Small ribosomal subunit protein uS11 (131 aa).

The protein belongs to the universal ribosomal protein uS11 family. As to quaternary structure, part of the 30S ribosomal subunit. Interacts with proteins S7 and S18. Binds to IF-3.

Its function is as follows. Located on the platform of the 30S subunit, it bridges several disparate RNA helices of the 16S rRNA. Forms part of the Shine-Dalgarno cleft in the 70S ribosome. The chain is Small ribosomal subunit protein uS11 from Saccharophagus degradans (strain 2-40 / ATCC 43961 / DSM 17024).